The following is a 278-amino-acid chain: Bifunctional protein FolD (278 aa).

NADP(+) contacts are provided by residues Gly-163–Ser-165, Ser-188, and Val-229.

This sequence belongs to the tetrahydrofolate dehydrogenase/cyclohydrolase family. In terms of assembly, homodimer.

It carries out the reaction (6R)-5,10-methylene-5,6,7,8-tetrahydrofolate + NADP(+) = (6R)-5,10-methenyltetrahydrofolate + NADPH. The enzyme catalyses (6R)-5,10-methenyltetrahydrofolate + H2O = (6R)-10-formyltetrahydrofolate + H(+). It functions in the pathway one-carbon metabolism; tetrahydrofolate interconversion. Its function is as follows. Catalyzes the oxidation of 5,10-methylenetetrahydrofolate to 5,10-methenyltetrahydrofolate and then the hydrolysis of 5,10-methenyltetrahydrofolate to 10-formyltetrahydrofolate. This Exiguobacterium sp. (strain ATCC BAA-1283 / AT1b) protein is Bifunctional protein FolD.